We begin with the raw amino-acid sequence, 245 residues long: Tetraspanin-6 (245 aa).

Residues methionine 1–serine 19 lie on the Cytoplasmic side of the membrane. A helical membrane pass occupies residues valine 20–isoleucine 40. The Extracellular portion of the chain corresponds to tryptophan 41–asparagine 59. A helical membrane pass occupies residues valine 60–phenylalanine 80. The Cytoplasmic portion of the chain corresponds to alanine 81 to tyrosine 93. A helical transmembrane segment spans residues alanine 94–phenylalanine 114. Topologically, residues arginine 115–glutamate 208 are extracellular. Asparagine 134 carries an N-linked (GlcNAc...) asparagine glycan. Residues methionine 209–leucine 229 traverse the membrane as a helical segment. Over alanine 230–valine 245 the chain is Cytoplasmic.

Belongs to the tetraspanin (TM4SF) family.

It localises to the membrane. The chain is Tetraspanin-6 (TSPAN6) from Homo sapiens (Human).